The chain runs to 483 residues: MAAFTPITIAYGDGIGPEIMEAVLYILRKAEARISLETIEVGEKLYKKHYTSGISEESWDVIQRTGIILKAPITTPQSGGYKSLNVTIRKTLQLFANIRPVVSFYPFTRTLHPNLNLTIIRENEEDLYSGVEYRQTHNMYESMKLISHTGCKKIIRYAFEYAIKNNRKKVTCLTKDNIMKFSDGIFHRVFNEIAKEYPQINNEHYIIDIGTAKLATKPEIFDIIVTSNLYGDIISDVAAEISGSVGLAGSANIGQHYAMFEAVHGSAPDIAGKGIANPSGLLNAAIMMLVHIGQGDIASLIENAWKKTIEDGVHTFDIYNEHSSSKKVCTKEFAVEVIKRLGQLPITLPKAAYPLIVKKQESNIDYKIDTREVKKLVGTDIFINMHVFSAHDIADKINKLDIGNFELKTISSKGLKLWPHDSRFEIISDHWCCRFMNKDGTEIKHLDITMLLQSLSKANIDFIKVENLFEFDGVAWYSLAQGE.

NADP(+) is bound at residue threonine 74. D-threo-isocitrate contacts are provided by serine 83, asparagine 85, arginine 89, arginine 99, and arginine 121. A Mg(2+)-binding site is contributed by aspartate 232. Residues 264–270 and asparagine 277 each bind NADP(+); that span reads HGSAPDI.

This sequence belongs to the isocitrate and isopropylmalate dehydrogenases family. As to quaternary structure, homodimer. Mg(2+) is required as a cofactor. Requires Mn(2+) as cofactor.

It carries out the reaction D-threo-isocitrate + NADP(+) = 2-oxoglutarate + CO2 + NADPH. Its function is as follows. Catalyzes the oxidative decarboxylation of isocitrate to 2-oxoglutarate and carbon dioxide with the concomitant reduction of NADP(+). In Rickettsia prowazekii (strain Madrid E), this protein is Isocitrate dehydrogenase [NADP] (icd).